Reading from the N-terminus, the 188-residue chain is MKVVRAFVGFFTSKSINEVAERIKKEVDLKIMGKWVEPQNVHMTLQFLGDITEAQAIEVIKNLQEISKKNIPFRIKYKGLGVFPDVKRPRVLWIGVSEGANKLTNLAKEVARLNAKKGIIPKNSKNFVPHVTICRIKSYDRKTLNELLRKYRTVEFGEDEVNKIALISSTLTSVGPIYTVVEEFYLGG.

His-42 functions as the Proton donor in the catalytic mechanism. Short sequence motifs (HXTX) lie at residues 42–45 (HMTL) and 130–133 (HVTI). Residue His-130 is the Proton acceptor of the active site.

It belongs to the 2H phosphoesterase superfamily. ThpR family.

It carries out the reaction a 3'-end 2',3'-cyclophospho-ribonucleotide-RNA + H2O = a 3'-end 2'-phospho-ribonucleotide-RNA + H(+). Hydrolyzes RNA 2',3'-cyclic phosphodiester to an RNA 2'-phosphomonoester. The protein is RNA 2',3'-cyclic phosphodiesterase of Aquifex aeolicus (strain VF5).